A 304-amino-acid polypeptide reads, in one-letter code: Ribonuclease Z (304 aa).

Residues His-61, His-63, Asp-65, His-66, His-138, Asp-206, and His-265 each contribute to the Zn(2+) site. Asp-65 functions as the Proton acceptor in the catalytic mechanism.

The protein belongs to the RNase Z family. Homodimer. The cofactor is Zn(2+).

The catalysed reaction is Endonucleolytic cleavage of RNA, removing extra 3' nucleotides from tRNA precursor, generating 3' termini of tRNAs. A 3'-hydroxy group is left at the tRNA terminus and a 5'-phosphoryl group is left at the trailer molecule.. In terms of biological role, zinc phosphodiesterase, which displays some tRNA 3'-processing endonuclease activity. Probably involved in tRNA maturation, by removing a 3'-trailer from precursor tRNA. The chain is Ribonuclease Z from Lachnospira eligens (strain ATCC 27750 / DSM 3376 / VPI C15-48 / C15-B4) (Eubacterium eligens).